The following is a 627-amino-acid chain: Altered inheritance of mitochondria protein 9, mitochondrial (627 aa).

The N-terminal 43 residues, 1–43 (MIRYTVAGHSRRCVVGASKRVGAIKCITVAATKRFISNKPNEV), are a transit peptide targeting the mitochondrion.

It belongs to the AIM9 family.

Its subcellular location is the mitochondrion. The polypeptide is Altered inheritance of mitochondria protein 9, mitochondrial (AIM9) (Saccharomyces cerevisiae (strain RM11-1a) (Baker's yeast)).